We begin with the raw amino-acid sequence, 347 residues long: MQIKQNISLKPYHTFAIEQCSHYLVEVGSVDELVDIYANPDFRELPKLILGSGSNVLFTQPFSGVVVVNRLSGKTLSEDESFYYIHAEGGEDWPNLVEWCVQQGIGGLENLALIPGCAGSAPIQNIGAYGVEFKDVCQYVDILMLDDFSQRRLSAEECQFGYRDSVFKHALYNQCVVIAVGLKLPKTWQANNSYGPLQEIAEHELSPMSIFHKVCEVRREKLPDPKQIGNAGSFFKNPIIDKAHWQQLKAQFPNIVAYPAGEQMKVAAGWLIDQCDFKGVQVGGAQVHPKQALVLTNAQSCTAQDIIQLASLICDAVWDKYQIALEHEVRFISTVGETCLSELRVES.

Positions 16–187 (AIEQCSHYLV…IAVGLKLPKT (172 aa)) constitute an FAD-binding PCMH-type domain. The active site involves Arg163. Ser233 (proton donor) is an active-site residue. Glu328 is a catalytic residue.

The protein belongs to the MurB family. FAD serves as cofactor.

The protein localises to the cytoplasm. It carries out the reaction UDP-N-acetyl-alpha-D-muramate + NADP(+) = UDP-N-acetyl-3-O-(1-carboxyvinyl)-alpha-D-glucosamine + NADPH + H(+). Its pathway is cell wall biogenesis; peptidoglycan biosynthesis. Its function is as follows. Cell wall formation. The protein is UDP-N-acetylenolpyruvoylglucosamine reductase of Vibrio vulnificus (strain CMCP6).